The primary structure comprises 283 residues: MIVTDKISDVRNIIKEQKLSGKKIGLVPTMGYLHEGHLSLVRIAKKHSDFVAVSIFVNPIQFGPNEDFDRYPRDLERDLKLLEKEGCDLVFAPSVEEMYPSELLTTVNVDKITEKLCGAFRPGHFKGVTTVVAKLFNIFTPDIAVFGQKDAQQVAVIKKMVEDLNFPVEIIKAPIVRESDGLAMSSRNVYLNPEERKAALILSKSLKEAEKLLLNGERNANTIIKKVNEVLNSEPLCKVQYVSCVHPDTLEDLTYIKDKALIAIACFIGTTRLIDNLLWGENI.

Residue 30-37 (MGYLHEGH) coordinates ATP. The Proton donor role is filled by histidine 37. A (R)-pantoate-binding site is contributed by glutamine 61. A beta-alanine-binding site is contributed by glutamine 61. Residue 147-150 (GQKD) participates in ATP binding. Glutamine 153 is a binding site for (R)-pantoate. ATP contacts are provided by residues valine 176 and 184 to 187 (MSSR).

It belongs to the pantothenate synthetase family. Homodimer.

The protein resides in the cytoplasm. It carries out the reaction (R)-pantoate + beta-alanine + ATP = (R)-pantothenate + AMP + diphosphate + H(+). Its pathway is cofactor biosynthesis; (R)-pantothenate biosynthesis; (R)-pantothenate from (R)-pantoate and beta-alanine: step 1/1. Its function is as follows. Catalyzes the condensation of pantoate with beta-alanine in an ATP-dependent reaction via a pantoyl-adenylate intermediate. This chain is Pantothenate synthetase, found in Thermoanaerobacter sp. (strain X514).